The primary structure comprises 78 residues: Small ribosomal subunit protein bS18 (78 aa).

This sequence belongs to the bacterial ribosomal protein bS18 family. In terms of assembly, part of the 30S ribosomal subunit. Forms a tight heterodimer with protein bS6.

Binds as a heterodimer with protein bS6 to the central domain of the 16S rRNA, where it helps stabilize the platform of the 30S subunit. This chain is Small ribosomal subunit protein bS18, found in Alkaliphilus oremlandii (strain OhILAs) (Clostridium oremlandii (strain OhILAs)).